We begin with the raw amino-acid sequence, 95 residues long: Small ribosomal subunit protein bS6 (95 aa).

This sequence belongs to the bacterial ribosomal protein bS6 family.

Its function is as follows. Binds together with bS18 to 16S ribosomal RNA. The polypeptide is Small ribosomal subunit protein bS6 (Clostridium acetobutylicum (strain ATCC 824 / DSM 792 / JCM 1419 / IAM 19013 / LMG 5710 / NBRC 13948 / NRRL B-527 / VKM B-1787 / 2291 / W)).